A 445-amino-acid polypeptide reads, in one-letter code: Tubulin beta-2 chain (445 aa).

GTP is bound by residues glutamine 11, glutamate 69, serine 138, glycine 142, threonine 143, glycine 144, asparagine 204, and asparagine 226. Glutamate 69 is a Mg(2+) binding site. Residues 424–445 are disordered; the sequence is QYQDATAEDEGEFDEDEEVEEA. Residues 429 to 445 are compositionally biased toward acidic residues; the sequence is TAEDEGEFDEDEEVEEA.

This sequence belongs to the tubulin family. In terms of assembly, dimer of alpha and beta chains. A typical microtubule is a hollow water-filled tube with an outer diameter of 25 nm and an inner diameter of 15 nM. Alpha-beta heterodimers associate head-to-tail to form protofilaments running lengthwise along the microtubule wall with the beta-tubulin subunit facing the microtubule plus end conferring a structural polarity. Microtubules usually have 13 protofilaments but different protofilament numbers can be found in some organisms and specialized cells. Mg(2+) serves as cofactor.

The protein localises to the cytoplasm. It is found in the cytoskeleton. Its function is as follows. Tubulin is the major constituent of microtubules, a cylinder consisting of laterally associated linear protofilaments composed of alpha- and beta-tubulin heterodimers. Microtubules grow by the addition of GTP-tubulin dimers to the microtubule end, where a stabilizing cap forms. Below the cap, tubulin dimers are in GDP-bound state, owing to GTPase activity of alpha-tubulin. The chain is Tubulin beta-2 chain (TUB-2) from Echinococcus multilocularis (Fox tapeworm).